The following is a 239-amino-acid chain: Uridylate kinase (239 aa).

Residue 12–15 (KLSG) coordinates ATP. Residues 20 to 25 (GDQGYG) are involved in allosteric activation by GTP. G54 serves as a coordination point for UMP. 2 residues coordinate ATP: G55 and R59. UMP is bound by residues D74 and 135–142 (TGNPYFTT). 3 residues coordinate ATP: T162, Y168, and D171.

The protein belongs to the UMP kinase family. In terms of assembly, homohexamer.

The protein localises to the cytoplasm. It carries out the reaction UMP + ATP = UDP + ADP. It participates in pyrimidine metabolism; CTP biosynthesis via de novo pathway; UDP from UMP (UMPK route): step 1/1. Its activity is regulated as follows. Allosterically activated by GTP. Inhibited by UTP. Functionally, catalyzes the reversible phosphorylation of UMP to UDP. This is Uridylate kinase from Geobacter metallireducens (strain ATCC 53774 / DSM 7210 / GS-15).